The sequence spans 381 residues: Heterogeneous nuclear rnp K-like protein 2 (381 aa).

A disordered region spans residues 1–34; the sequence is MSQFFEAATPVAIPTNNTNGGSSDAGSAATGGAP. Residues 15–33 are compositionally biased toward low complexity; the sequence is TNNTNGGSSDAGSAATGGA. KH domains follow at residues 43-107, 156-221, and 258-326; these read TINH…IGDI, IGYV…LIEI, and NTRI…ESML. The segment at 357–381 is disordered; that stretch reads RSDSASFLEEKEEPQKNHDNKEEQS. 3 positions are modified to phosphoserine: S358, S360, and S362. Residues 369–381 are compositionally biased toward basic and acidic residues; the sequence is EPQKNHDNKEEQS.

It belongs to the HEK2 family. As to quaternary structure, binds RNA. In terms of processing, phosphorylated by the plasma membrane-Anchored casein kinase YCK1. Phosphorylation at its C-terminus reduces its RNA-binding capacity.

The protein resides in the cytoplasm. It is found in the P-body. The protein localises to the nucleus. It localises to the chromosome. Its subcellular location is the telomere. RNA-binding protein involved in the correct localization of transcripts in the cell. RNA localization is a widespread mechanism for achieving localized protein synthesis. Required for the asymmetric localization to the daughter cell nucleus of the ASH1 transcript, coding for a specific repressor of transcription. Overexpression inhibits translation of the ASH1 transcript. Involved in the stability of transcripts, like the MTL1 mRNA. Involved in structural and functional organization of telomeric chromatin and regulates silencing at the HMR locus. This Saccharomyces cerevisiae (strain RM11-1a) (Baker's yeast) protein is Heterogeneous nuclear rnp K-like protein 2 (HEK2).